The primary structure comprises 483 residues: Glycogen synthase kinase-3 alpha (483 aa).

The segment covering 1–15 (MSGGGPSGGGPGGSG) has biased composition (gly residues). Residues 1-96 (MSGGGPSGGG…PPPGVKLGRD (96 aa)) form a disordered region. S2 bears the N-acetylserine mark. S2 is modified (phosphoserine). At S21 the chain carries Phosphoserine; by PKB/AKT1. Gly residues predominate over residues 25–82 (PGGGGGGGGGGPGGSASGPGGTGGGKASVGAMGGGVGASSSGGGPSGSGGGGSGGPGA). Residues S72, S77, and S97 each carry the phosphoserine modification. The 285-residue stretch at 119-403 (YTDIKVIGNG…PLEACAHSFF (285 aa)) folds into the Protein kinase domain. ATP is bound by residues 125 to 133 (IGNGSFGVV) and K148. D244 functions as the Proton acceptor in the catalytic mechanism. Y279 is modified (phosphotyrosine). The disordered stretch occupies residues 443 to 483 (PHLRSPSGPATLTSSSQALTETQTGQDWQAPDATPTLTNSS). The segment covering 450 to 469 (GPATLTSSSQALTETQTGQD) has biased composition (polar residues).

This sequence belongs to the protein kinase superfamily. CMGC Ser/Thr protein kinase family. GSK-3 subfamily. In terms of assembly, monomer. Interacts with ARRB2, AXIN1 and CTNNB1/beta-catenin. Interacts with CTNND2. Interacts with LMBR1L. Interacts with DDX3X. Interacts with TNFRSF10B. Phosphorylated by AKT1 at Ser-21: upon insulin-mediated signaling, the activated PKB/AKT1 protein kinase phosphorylates and deactivates GSK3A, resulting in the dephosphorylation and activation of GYS1. Activated by phosphorylation at Tyr-279.

The enzyme catalyses L-seryl-[tau protein] + ATP = O-phospho-L-seryl-[tau protein] + ADP + H(+). The catalysed reaction is L-threonyl-[tau protein] + ATP = O-phospho-L-threonyl-[tau protein] + ADP + H(+). It carries out the reaction L-seryl-[protein] + ATP = O-phospho-L-seryl-[protein] + ADP + H(+). It catalyses the reaction L-threonyl-[protein] + ATP = O-phospho-L-threonyl-[protein] + ADP + H(+). With respect to regulation, activated by phosphorylation at Tyr-279. In response to insulin, inhibited by phosphorylation at Ser-21 by PKB/AKT1; phosphorylation at this site causes a conformational change, preventing access of substrates to the active site. Inhibited by lithium. Constitutively active protein kinase that acts as a negative regulator in the hormonal control of glucose homeostasis, Wnt signaling and regulation of transcription factors and microtubules, by phosphorylating and inactivating glycogen synthase (GYS1 or GYS2), CTNNB1/beta-catenin, APC and AXIN1. Requires primed phosphorylation of the majority of its substrates. Contributes to insulin regulation of glycogen synthesis by phosphorylating and inhibiting GYS1 activity and hence glycogen synthesis. Regulates glycogen metabolism in liver, but not in muscle. May also mediate the development of insulin resistance by regulating activation of transcription factors. In Wnt signaling, regulates the level and transcriptional activity of nuclear CTNNB1/beta-catenin. Facilitates amyloid precursor protein (APP) processing and the generation of APP-derived amyloid plaques found in Alzheimer disease. May be involved in the regulation of replication in pancreatic beta-cells. Is necessary for the establishment of neuronal polarity and axon outgrowth. Through phosphorylation of the anti-apoptotic protein MCL1, may control cell apoptosis in response to growth factors deprivation. Acts as a regulator of autophagy by mediating phosphorylation of KAT5/TIP60 under starvation conditions, activating KAT5/TIP60 acetyltransferase activity and promoting acetylation of key autophagy regulators, such as ULK1 and RUBCNL/Pacer. Negatively regulates extrinsic apoptotic signaling pathway via death domain receptors. Promotes the formation of an anti-apoptotic complex, made of DDX3X, BRIC2 and GSK3B, at death receptors, including TNFRSF10B. The anti-apoptotic function is most effective with weak apoptotic signals and can be overcome by stronger stimulation. This chain is Glycogen synthase kinase-3 alpha (Gsk3a), found in Rattus norvegicus (Rat).